The sequence spans 330 residues: Phosphate acyltransferase (330 aa).

It belongs to the PlsX family. In terms of assembly, homodimer. Probably interacts with PlsY.

Its subcellular location is the cytoplasm. The enzyme catalyses a fatty acyl-[ACP] + phosphate = an acyl phosphate + holo-[ACP]. It participates in lipid metabolism; phospholipid metabolism. Catalyzes the reversible formation of acyl-phosphate (acyl-PO(4)) from acyl-[acyl-carrier-protein] (acyl-ACP). This enzyme utilizes acyl-ACP as fatty acyl donor, but not acyl-CoA. The protein is Phosphate acyltransferase of Bacillus cereus (strain ATCC 14579 / DSM 31 / CCUG 7414 / JCM 2152 / NBRC 15305 / NCIMB 9373 / NCTC 2599 / NRRL B-3711).